Reading from the N-terminus, the 47-residue chain is Cytochrome b559 subunit beta (47 aa).

Residues tryptophan 22 to alanine 38 form a helical membrane-spanning segment. Residue histidine 26 participates in heme binding.

This sequence belongs to the PsbE/PsbF family. As to quaternary structure, heterodimer of an alpha subunit and a beta subunit. PSII is composed of 1 copy each of membrane proteins PsbA, PsbB, PsbC, PsbD, PsbE, PsbF, PsbH, PsbI, PsbJ, PsbK, PsbL, PsbM, PsbT, PsbX, PsbY, PsbZ, Psb30/Ycf12, peripheral proteins PsbO, CyanoQ (PsbQ), PsbU, PsbV and a large number of cofactors. It forms dimeric complexes. It depends on heme b as a cofactor.

It is found in the cellular thylakoid membrane. In terms of biological role, this b-type cytochrome is tightly associated with the reaction center of photosystem II (PSII). PSII is a light-driven water:plastoquinone oxidoreductase that uses light energy to abstract electrons from H(2)O, generating O(2) and a proton gradient subsequently used for ATP formation. It consists of a core antenna complex that captures photons, and an electron transfer chain that converts photonic excitation into a charge separation. The chain is Cytochrome b559 subunit beta from Synechococcus sp. (strain JA-3-3Ab) (Cyanobacteria bacterium Yellowstone A-Prime).